We begin with the raw amino-acid sequence, 340 residues long: Phosphoribosylformylglycinamidine cyclo-ligase (340 aa).

This sequence belongs to the AIR synthase family.

It localises to the cytoplasm. The catalysed reaction is 2-formamido-N(1)-(5-O-phospho-beta-D-ribosyl)acetamidine + ATP = 5-amino-1-(5-phospho-beta-D-ribosyl)imidazole + ADP + phosphate + H(+). It functions in the pathway purine metabolism; IMP biosynthesis via de novo pathway; 5-amino-1-(5-phospho-D-ribosyl)imidazole from N(2)-formyl-N(1)-(5-phospho-D-ribosyl)glycinamide: step 2/2. The sequence is that of Phosphoribosylformylglycinamidine cyclo-ligase from Streptococcus pyogenes serotype M28 (strain MGAS6180).